We begin with the raw amino-acid sequence, 168 residues long: Crossover junction endodeoxyribonuclease RuvC (168 aa).

Residues Asp9, Glu70, and Asp145 contribute to the active site. Positions 9, 70, and 145 each coordinate Mg(2+).

Belongs to the RuvC family. In terms of assembly, homodimer which binds Holliday junction (HJ) DNA. The HJ becomes 2-fold symmetrical on binding to RuvC with unstacked arms; it has a different conformation from HJ DNA in complex with RuvA. In the full resolvosome a probable DNA-RuvA(4)-RuvB(12)-RuvC(2) complex forms which resolves the HJ. Requires Mg(2+) as cofactor.

The protein localises to the cytoplasm. The catalysed reaction is Endonucleolytic cleavage at a junction such as a reciprocal single-stranded crossover between two homologous DNA duplexes (Holliday junction).. The RuvA-RuvB-RuvC complex processes Holliday junction (HJ) DNA during genetic recombination and DNA repair. Endonuclease that resolves HJ intermediates. Cleaves cruciform DNA by making single-stranded nicks across the HJ at symmetrical positions within the homologous arms, yielding a 5'-phosphate and a 3'-hydroxyl group; requires a central core of homology in the junction. The consensus cleavage sequence is 5'-(A/T)TT(C/G)-3'. Cleavage occurs on the 3'-side of the TT dinucleotide at the point of strand exchange. HJ branch migration catalyzed by RuvA-RuvB allows RuvC to scan DNA until it finds its consensus sequence, where it cleaves and resolves the cruciform DNA. This Chlamydia pneumoniae (Chlamydophila pneumoniae) protein is Crossover junction endodeoxyribonuclease RuvC.